The chain runs to 416 residues: MAILGIVAEYNPFHNGHLYLLEKSRQQGDFSATVVVMSGNFLQRGEPAFCDKWARAEMALTAGVDLLIELPFCFATRSAYYFAKGAVQLLQRSGVVTHLAFGSESGQLSQLQEIAGILAHEPESYKTALKKRLSQGWSFPLARSSALQEYMGGEKKQLQEILPGPNNILALEYLRVIEEEGIPLLPLTIPRQGSSFHSSDLSPYSSARAIRQALYHNLDWEKITNSISPATEKILQREIALGRAPIGPDSLEQAIMVNLRLVSTDYLREIYEVSEGLEFRIKEATNSCGTLEELRQFIKSKRYSLTRINRTLLYTLFALSKNQVELYDQHGPQYLHILGFSAKGQEILQKIKIKSKLKIFSRGSEMKQARDKNPGTALAEMIKLDCQATDVYSLLFPNPATRRAGRDFTTSPVPGT.

Residues 7–20 (VAEYNPFHNGHLYL), Gly102, Asn166, and Arg191 contribute to the ATP site.

Belongs to the TmcAL family.

The protein localises to the cytoplasm. The enzyme catalyses cytidine(34) in elongator tRNA(Met) + acetate + ATP = N(4)-acetylcytidine(34) in elongator tRNA(Met) + AMP + diphosphate. Its function is as follows. Catalyzes the formation of N(4)-acetylcytidine (ac(4)C) at the wobble position of elongator tRNA(Met), using acetate and ATP as substrates. First activates an acetate ion to form acetyladenylate (Ac-AMP) and then transfers the acetyl group to tRNA to form ac(4)C34. This Syntrophomonas wolfei subsp. wolfei (strain DSM 2245B / Goettingen) protein is tRNA(Met) cytidine acetate ligase.